The sequence spans 111 residues: Large ribosomal subunit protein uL24 (111 aa).

This sequence belongs to the universal ribosomal protein uL24 family. Part of the 50S ribosomal subunit.

In terms of biological role, one of two assembly initiator proteins, it binds directly to the 5'-end of the 23S rRNA, where it nucleates assembly of the 50S subunit. One of the proteins that surrounds the polypeptide exit tunnel on the outside of the subunit. The sequence is that of Large ribosomal subunit protein uL24 from Bifidobacterium longum (strain DJO10A).